Reading from the N-terminus, the 261-residue chain is Triosephosphate isomerase (261 aa).

10-12 (NWK) provides a ligand contact to substrate. Catalysis depends on H100, which acts as the Electrophile. Catalysis depends on E172, which acts as the Proton acceptor. Residues G178, S218, and 239-240 (GG) contribute to the substrate site.

The protein belongs to the triosephosphate isomerase family. Homodimer.

The protein resides in the cytoplasm. It carries out the reaction D-glyceraldehyde 3-phosphate = dihydroxyacetone phosphate. It participates in carbohydrate biosynthesis; gluconeogenesis. Its pathway is carbohydrate degradation; glycolysis; D-glyceraldehyde 3-phosphate from glycerone phosphate: step 1/1. Functionally, involved in the gluconeogenesis. Catalyzes stereospecifically the conversion of dihydroxyacetone phosphate (DHAP) to D-glyceraldehyde-3-phosphate (G3P). The polypeptide is Triosephosphate isomerase (Rhodococcus jostii (strain RHA1)).